The chain runs to 287 residues: 2-dehydro-3-deoxyphosphooctonate aldolase (287 aa).

This sequence belongs to the KdsA family.

It is found in the cytoplasm. The enzyme catalyses D-arabinose 5-phosphate + phosphoenolpyruvate + H2O = 3-deoxy-alpha-D-manno-2-octulosonate-8-phosphate + phosphate. Its pathway is carbohydrate biosynthesis; 3-deoxy-D-manno-octulosonate biosynthesis; 3-deoxy-D-manno-octulosonate from D-ribulose 5-phosphate: step 2/3. The protein operates within bacterial outer membrane biogenesis; lipopolysaccharide biosynthesis. The polypeptide is 2-dehydro-3-deoxyphosphooctonate aldolase (Rhodopseudomonas palustris (strain TIE-1)).